We begin with the raw amino-acid sequence, 64 residues long: Disintegrin VLO5A (64 aa).

The Disintegrin domain maps to 1-64 (NSGNPCCDPV…SDCPRNPYKD (64 aa)). Disulfide bonds link C6–C29, C20–C26, C25–C50, and C38–C57. Positions 42–44 (VGD) match the Cell attachment site; atypical (VGD) motif.

The protein belongs to the venom metalloproteinase (M12B) family. P-II subfamily. P-IIe sub-subfamily. Heterodimer with VLO5B; disulfide-linked. In terms of tissue distribution, expressed by the venom gland.

The protein resides in the secreted. Poor inhibitor of platelet aggregation. The disintegrin inhibits the adhesion of the alpha-4/beta-1 (ITGA4/ITGB1) integrin to VCAM-1. Inhibition on alpha-IIb/beta-3 (ITGA2B/ITGB3) is low. The protein is Disintegrin VLO5A of Macrovipera lebetina obtusa (Levant blunt-nosed viper).